The primary structure comprises 264 residues: DNA repair protein RecO (264 aa).

This sequence belongs to the RecO family.

Functionally, involved in DNA repair and RecF pathway recombination. This chain is DNA repair protein RecO, found in Chlorobium luteolum (strain DSM 273 / BCRC 81028 / 2530) (Pelodictyon luteolum).